The sequence spans 367 residues: Dihydroorotate dehydrogenase (quinone) (367 aa).

Residues 67–71 (AGFDK) and threonine 91 each bind FMN. Lysine 71 contacts substrate. 116–120 (NRLGF) provides a ligand contact to substrate. FMN contacts are provided by asparagine 145 and asparagine 178. Asparagine 178 contacts substrate. Catalysis depends on serine 181, which acts as the Nucleophile. Asparagine 183 is a substrate binding site. Residues lysine 219 and threonine 247 each coordinate FMN. 248-249 (NT) provides a ligand contact to substrate. FMN is bound by residues glycine 269, glycine 298, and 319-320 (YT).

The protein belongs to the dihydroorotate dehydrogenase family. Type 2 subfamily. Monomer. Requires FMN as cofactor.

It localises to the cell membrane. It catalyses the reaction (S)-dihydroorotate + a quinone = orotate + a quinol. Its pathway is pyrimidine metabolism; UMP biosynthesis via de novo pathway; orotate from (S)-dihydroorotate (quinone route): step 1/1. In terms of biological role, catalyzes the conversion of dihydroorotate to orotate with quinone as electron acceptor. In Roseiflexus castenholzii (strain DSM 13941 / HLO8), this protein is Dihydroorotate dehydrogenase (quinone).